Reading from the N-terminus, the 132-residue chain is Small ribosomal subunit protein uS8 (132 aa).

This sequence belongs to the universal ribosomal protein uS8 family. As to quaternary structure, part of the 30S ribosomal subunit. Contacts proteins S5 and S12.

One of the primary rRNA binding proteins, it binds directly to 16S rRNA central domain where it helps coordinate assembly of the platform of the 30S subunit. The protein is Small ribosomal subunit protein uS8 of Francisella tularensis subsp. novicida (strain U112).